The primary structure comprises 458 residues: Phosphoglucosamine mutase (458 aa).

Ser-108 (phosphoserine intermediate) is an active-site residue. Positions 108, 247, 249, and 251 each coordinate Mg(2+). Position 108 is a phosphoserine (Ser-108).

It belongs to the phosphohexose mutase family. Requires Mg(2+) as cofactor. In terms of processing, activated by phosphorylation.

It catalyses the reaction alpha-D-glucosamine 1-phosphate = D-glucosamine 6-phosphate. In terms of biological role, catalyzes the conversion of glucosamine-6-phosphate to glucosamine-1-phosphate. This Nitrosomonas eutropha (strain DSM 101675 / C91 / Nm57) protein is Phosphoglucosamine mutase.